The sequence spans 652 residues: DNA ligase (652 aa).

NAD(+) is bound by residues D29–D33, S78–L79, and E107. The N6-AMP-lysine intermediate role is filled by K109. Residues R130, E164, K278, and K302 each contribute to the NAD(+) site. Residues C395, C398, C413, and C418 each coordinate Zn(2+). The region spanning S577–L652 is the BRCT domain.

The protein belongs to the NAD-dependent DNA ligase family. LigA subfamily. Requires Mg(2+) as cofactor. Mn(2+) is required as a cofactor.

It catalyses the reaction NAD(+) + (deoxyribonucleotide)n-3'-hydroxyl + 5'-phospho-(deoxyribonucleotide)m = (deoxyribonucleotide)n+m + AMP + beta-nicotinamide D-nucleotide.. In terms of biological role, DNA ligase that catalyzes the formation of phosphodiester linkages between 5'-phosphoryl and 3'-hydroxyl groups in double-stranded DNA using NAD as a coenzyme and as the energy source for the reaction. It is essential for DNA replication and repair of damaged DNA. The chain is DNA ligase from Streptococcus agalactiae serotype V (strain ATCC BAA-611 / 2603 V/R).